We begin with the raw amino-acid sequence, 526 residues long: Probable feruloyl esterase B-2 (526 aa).

A signal peptide spans 1–19 (MPSLRRLLPFLAAGSAALA). Cystine bridges form between cysteine 28-cysteine 75 and cysteine 63-cysteine 114. N-linked (GlcNAc...) asparagine glycosylation is found at asparagine 53, asparagine 85, asparagine 98, and asparagine 138. 3 disulfides stabilise this stretch: cysteine 187/cysteine 441, cysteine 256/cysteine 273, and cysteine 282/cysteine 291. Serine 188 serves as the catalytic Acyl-ester intermediate. An N-linked (GlcNAc...) asparagine glycan is attached at asparagine 246. Ca(2+)-binding residues include aspartate 257, aspartate 260, alanine 262, aspartate 264, and isoleucine 266. N-linked (GlcNAc...) asparagine glycans are attached at residues asparagine 287 and asparagine 311. Catalysis depends on charge relay system residues aspartate 400 and histidine 440. N-linked (GlcNAc...) asparagine glycosylation is found at asparagine 490 and asparagine 516. Residues cysteine 503 and cysteine 525 are joined by a disulfide bond.

Belongs to the tannase family.

It is found in the secreted. The catalysed reaction is feruloyl-polysaccharide + H2O = ferulate + polysaccharide.. Its function is as follows. Involved in degradation of plant cell walls. Hydrolyzes the feruloyl-arabinose ester bond in arabinoxylans as well as the feruloyl-galactose and feruloyl-arabinose ester bonds in pectin. This is Probable feruloyl esterase B-2 (faeB-2) from Aspergillus oryzae (strain ATCC 42149 / RIB 40) (Yellow koji mold).